Reading from the N-terminus, the 198-residue chain is MTNADNELEPRLITETGLDQRLADIIEPVLVGMGFRLIRVRMLNQNGATMQVMAERNDGTMTVQDCEEVSMAISPVLDVEDPIDKEYHLEVSSPGIDRPMVRKSDFVRWQGHLVKCETSIMIGNRKRFRGKIVEADADGFTLERDQVAYGEEQKVIIPFTALSDAKLILTDDLIRDALRADKLAKAQAANQNEADDQE.

Belongs to the RimP family.

The protein localises to the cytoplasm. Its function is as follows. Required for maturation of 30S ribosomal subunits. The protein is Ribosome maturation factor RimP of Rhizobium etli (strain ATCC 51251 / DSM 11541 / JCM 21823 / NBRC 15573 / CFN 42).